A 336-amino-acid chain; its full sequence is Nuclear envelope-associated protein 3 (336 aa).

Coiled coils occupy residues 14–87 and 128–261; these read LKDL…IRAS and VLSK…LKKK. The Bipartite nuclear localization signal motif lies at 240-261; the sequence is KTKELEDQVENQRRIDQELKKK. A helical transmembrane segment spans residues 313 to 330; that stretch reads LWDKSGFKIVVSMSMLIL.

In terms of assembly, forms homomers and heteromers with NEAP1 and NEAP2. Interacts with SUN1 and SUN2.

It is found in the nucleus inner membrane. The protein resides in the nucleus. Its subcellular location is the nucleoplasm. The polypeptide is Nuclear envelope-associated protein 3 (Arabidopsis thaliana (Mouse-ear cress)).